A 118-amino-acid chain; its full sequence is Non-specific lipid-transfer protein 2 (118 aa).

A signal peptide spans 1-25 (MARGMKLACVVLVICMVVIAPMAEG). Disulfide bonds link Cys-29/Cys-76, Cys-39/Cys-53, Cys-54/Cys-99, and Cys-74/Cys-113.

It belongs to the plant LTP family.

Plant non-specific lipid-transfer proteins transfer phospholipids as well as galactolipids across membranes. May play a role in wax or cutin deposition in the cell walls of expanding epidermal cells and certain secretory tissues. Binds saturated fatty acids, jasmonic acid and, with highest efficiency, unsaturated fatty acids and lysolipids. This is Non-specific lipid-transfer protein 2 from Lens culinaris (Lentil).